Reading from the N-terminus, the 457-residue chain is ATP synthase subunit beta (457 aa).

147–154 contacts ATP; that stretch reads GGAGVGKT.

Belongs to the ATPase alpha/beta chains family. F-type ATPases have 2 components, CF(1) - the catalytic core - and CF(0) - the membrane proton channel. CF(1) has five subunits: alpha(3), beta(3), gamma(1), delta(1), epsilon(1). CF(0) has three main subunits: a(1), b(2) and c(9-12). The alpha and beta chains form an alternating ring which encloses part of the gamma chain. CF(1) is attached to CF(0) by a central stalk formed by the gamma and epsilon chains, while a peripheral stalk is formed by the delta and b chains.

It is found in the cell inner membrane. The enzyme catalyses ATP + H2O + 4 H(+)(in) = ADP + phosphate + 5 H(+)(out). In terms of biological role, produces ATP from ADP in the presence of a proton gradient across the membrane. The catalytic sites are hosted primarily by the beta subunits. This Glaesserella parasuis serovar 5 (strain SH0165) (Haemophilus parasuis) protein is ATP synthase subunit beta.